Reading from the N-terminus, the 171-residue chain is UPF0312 protein SE_0264 (171 aa).

Belongs to the UPF0312 family.

This is UPF0312 protein SE_0264 from Staphylococcus epidermidis (strain ATCC 12228 / FDA PCI 1200).